Reading from the N-terminus, the 311-residue chain is Heme A synthase (311 aa).

Residues Met-1–Lys-6 are Cytoplasmic-facing. The helical transmembrane segment at Trp-7 to Thr-27 threads the bilayer. At Lys-28–Arg-62 the chain is on the extracellular side. Cys-35 and Cys-42 form a disulfide bridge. Glu-58 is an active-site residue. His-61 contributes to the heme o binding site. A helical membrane pass occupies residues Leu-63–Tyr-83. Topologically, residues Lys-84–Thr-91 are cytoplasmic. A helical membrane pass occupies residues Leu-92 to Val-112. The Extracellular portion of the chain corresponds to Trp-113–Ala-121. The helical transmembrane segment at Ile-122–Phe-142 threads the bilayer. His-123 contributes to the heme o binding site. Residues Glu-143–Met-159 are Cytoplasmic-facing. The helical transmembrane segment at Lys-160–Val-180 threads the bilayer. The Extracellular portion of the chain corresponds to Arg-181–Met-211. Cys-189 and Cys-195 form a disulfide bridge. The helical transmembrane segment at Gly-212–Ile-232 threads the bilayer. His-213 contributes to the heme b binding site. The Cytoplasmic segment spans residues Arg-233–Trp-243. Residues Gly-244 to Phe-264 form a helical membrane-spanning segment. The Extracellular portion of the chain corresponds to Thr-265–Met-271. Residues Ala-272–Leu-292 form a helical membrane-spanning segment. Position 275 (His-275) interacts with heme b. The Cytoplasmic portion of the chain corresponds to Gly-293–Lys-311.

Belongs to the COX15/CtaA family. Type 1 subfamily. As to quaternary structure, interacts with CtaB. Requires heme b as cofactor.

It localises to the cell membrane. The catalysed reaction is Fe(II)-heme o + 2 A + H2O = Fe(II)-heme a + 2 AH2. It participates in porphyrin-containing compound metabolism; heme A biosynthesis; heme A from heme O: step 1/1. Functionally, catalyzes the conversion of heme O to heme A by two successive hydroxylations of the methyl group at C8. The first hydroxylation forms heme I, the second hydroxylation results in an unstable dihydroxymethyl group, which spontaneously dehydrates, resulting in the formyl group of heme A. In Bacillus cereus (strain AH187), this protein is Heme A synthase.